The following is a 452-amino-acid chain: Mitochondrial distribution and morphology protein 10 (452 aa).

This sequence belongs to the MDM10 family. In terms of assembly, component of the ER-mitochondria encounter structure (ERMES) or MDM complex, composed of MMM1, MDM10, MDM12 and MDM34. Associates with the mitochondrial outer membrane sorting assembly machinery SAM(core) complex.

It is found in the mitochondrion outer membrane. Component of the ERMES/MDM complex, which serves as a molecular tether to connect the endoplasmic reticulum and mitochondria. Components of this complex are involved in the control of mitochondrial shape and protein biogenesis and may function in phospholipid exchange. MDM10 is involved in the late assembly steps of the general translocase of the mitochondrial outer membrane (TOM complex). Functions in the TOM40-specific route of the assembly of outer membrane beta-barrel proteins, including the association of TOM40 with the receptor TOM22 and small TOM proteins. Can associate with the SAM(core) complex as well as the MDM12-MMM1 complex, both involved in late steps of the major beta-barrel assembly pathway, that is responsible for biogenesis of all outer membrane beta-barrel proteins. May act as a switch that shuttles between both complexes and channels precursor proteins into the TOM40-specific pathway. Plays a role in mitochondrial morphology and in the inheritance of mitochondria. This is Mitochondrial distribution and morphology protein 10 from Kluyveromyces lactis (strain ATCC 8585 / CBS 2359 / DSM 70799 / NBRC 1267 / NRRL Y-1140 / WM37) (Yeast).